A 241-amino-acid polypeptide reads, in one-letter code: Uridylate kinase (241 aa).

12–15 contacts ATP; the sequence is KISG. Positions 20–25 are involved in allosteric activation by GTP; the sequence is GDKGNG. Gly-54 serves as a coordination point for UMP. 2 residues coordinate ATP: Gly-55 and Arg-59. Residues Asp-74 and 135–142 each bind UMP; that span reads TGNPYFST. Residues Asn-163, Tyr-169, and Asp-172 each contribute to the ATP site.

It belongs to the UMP kinase family. In terms of assembly, homohexamer.

It localises to the cytoplasm. The catalysed reaction is UMP + ATP = UDP + ADP. Its pathway is pyrimidine metabolism; CTP biosynthesis via de novo pathway; UDP from UMP (UMPK route): step 1/1. Its activity is regulated as follows. Allosterically activated by GTP. Inhibited by UTP. Catalyzes the reversible phosphorylation of UMP to UDP. This Lactobacillus helveticus (strain DPC 4571) protein is Uridylate kinase.